Consider the following 605-residue polypeptide: Hepatocyte nuclear factor 1-alpha-A (605 aa).

A dimerization region spans residues 1–31 (MASQLSYLQRELLQALLESGVTKEALKKALA). Positions 1 to 32 (MASQLSYLQRELLQALLESGVTKEALKKALAD) constitute an HNF-p1 domain. The tract at residues 57 to 81 (QLPNGLGESHISEDESSDDGEDFTP) is disordered. Residues 85-180 (KELERLSPEE…IARLFTFTEF (96 aa)) form the POU-specific atypical domain. Interaction with DNA regions lie at residues 128–130 (QRE), 141–147 (HLSQHLN), 153–156 (KTQK), 206–209 (RFKW), 266–268 (RVY), and 273–276 (NRRK). The Nuclear localization signal motif lies at 200 to 208 (KKMRRNRFK). The segment at residues 202–282 (MRRNRFKWGP…NRRKEEAFRH (81 aa)) is a DNA-binding region (homeobox; HNF1-type). Over residues 321 to 335 (DRSAVMANSQSTPSP) the composition is skewed to polar residues. The interval 321-343 (DRSAVMANSQSTPSPSALEPSHS) is disordered. The interval 448 to 453 (PSHQLH) is not present in other members of the HNF1 family.

This sequence belongs to the HNF1 homeobox family. In terms of assembly, binds DNA as dimer. Forms a homodimer or heterodimer with HNF1-alpha-B. Potentially also form a heterodimer with HNF1-beta. In terms of tissue distribution, protein expressed in liver, stomach, small intestine, colon and kidney. Not expressed in spleen, lung, blood, heart muscle, skeletal muscle, testis and brain.

The protein localises to the nucleus. Functionally, transcriptional activator that regulates the tissue specific expression of multiple genes, especially in pancreas and liver. Binds to the hepatocyte specific promoter element HP1. Binds to the inverted palindrome 5'-GTTAATNATTAAC-3'. This is Hepatocyte nuclear factor 1-alpha-A (hnf1a-a) from Xenopus laevis (African clawed frog).